The sequence spans 226 residues: Ras-related protein Rab11A (226 aa).

GTP contacts are provided by residues 24–32, 43–49, 72–76, 130–133, and 160–162; these read GDSAVGKSQ, SLDSKST, DTAGQ, NKCD, and SAL. An Effector region motif is present at residues 46 to 54; the sequence is SKSTIGVEF. Residues cysteine 222 and cysteine 223 are each lipidated (S-geranylgeranyl cysteine). Cysteine 223 bears the Cysteine methyl ester mark. A propeptide spans 224–226 (removed in mature form); the sequence is QAS.

It belongs to the small GTPase superfamily. Rab family.

It localises to the cell membrane. The sequence is that of Ras-related protein Rab11A (RAB11A) from Lotus japonicus (Lotus corniculatus var. japonicus).